The chain runs to 309 residues: Olfactory receptor 7A17 (309 aa).

Residues 1–25 (MEPENDTGISEFVLLGLSEEPELQP) are Extracellular-facing. N-linked (GlcNAc...) asparagine glycosylation is present at Asn-5. A helical transmembrane segment spans residues 26–46 (FLFGLFLSMYLVTVLGNLLII). Residues 47–54 (LATISDSH) lie on the Cytoplasmic side of the membrane. Residues 55 to 75 (LHTPMYFFLSNLSFADICFIS) traverse the membrane as a helical segment. At 76-99 (TTIPKMLINIQTQSRVITYAGCIT) the chain is on the extracellular side. A disulfide bridge links Cys-97 with Cys-189. A helical transmembrane segment spans residues 100 to 120 (QMCFFVLFGGLDSLLLAVMAY). Residues 121-139 (DRFVAICHPLHYTVIMNPR) lie on the Cytoplasmic side of the membrane. Residues 140–160 (LCGLLVLASWMIAALNSLSQS) form a helical membrane-spanning segment. The Extracellular portion of the chain corresponds to 161-197 (LMVLWLSFCTDLEIPHFFCELNQVIHLACSDTFLNDM). Residues 198-217 (GMYFAAGLLAGGPLVGILCS) traverse the membrane as a helical segment. Topologically, residues 218 to 237 (YSKIVSSIRAISSAQGKYKA) are cytoplasmic. The helical transmembrane segment at 238-258 (FSTCASHLSVVSLFCCTGLGV) threads the bilayer. Topologically, residues 259–271 (YLTSAATHNSHTS) are extracellular. A helical membrane pass occupies residues 272-292 (ATASVMYTVATPMLNPFIYSL). Topologically, residues 293 to 309 (RNKDIKRALKMSFRGKQ) are cytoplasmic.

This sequence belongs to the G-protein coupled receptor 1 family.

The protein resides in the cell membrane. Odorant receptor. This Homo sapiens (Human) protein is Olfactory receptor 7A17 (OR7A17).